A 270-amino-acid chain; its full sequence is Phosphatidylglycerol--prolipoprotein diacylglyceryl transferase (270 aa).

4 helical membrane passes run 18 to 38, 55 to 75, 89 to 109, and 115 to 135; these read IAVHWYGIIIGLGALLGLWLA, LVLFAIPIAILCARAYYVIFQ, IWNGGLAIHGGLIGAVLTGII, and GLSFWKLADIAAPSILLGQAI. Arg137 is an a 1,2-diacyl-sn-glycero-3-phospho-(1'-sn-glycerol) binding site. 3 consecutive transmembrane segments (helical) span residues 177 to 197, 205 to 225, and 236 to 256; these read QPTFLYESLWSFTGVVVLLLL, GELFLIYVIWYSMGRYFIEGL, and LRIAQVISIVLILCAAALIAY.

This sequence belongs to the Lgt family.

It localises to the cell membrane. It carries out the reaction L-cysteinyl-[prolipoprotein] + a 1,2-diacyl-sn-glycero-3-phospho-(1'-sn-glycerol) = an S-1,2-diacyl-sn-glyceryl-L-cysteinyl-[prolipoprotein] + sn-glycerol 1-phosphate + H(+). The protein operates within protein modification; lipoprotein biosynthesis (diacylglyceryl transfer). In terms of biological role, catalyzes the transfer of the diacylglyceryl group from phosphatidylglycerol to the sulfhydryl group of the N-terminal cysteine of a prolipoprotein, the first step in the formation of mature lipoproteins. The sequence is that of Phosphatidylglycerol--prolipoprotein diacylglyceryl transferase from Bacillus licheniformis (strain ATCC 14580 / DSM 13 / JCM 2505 / CCUG 7422 / NBRC 12200 / NCIMB 9375 / NCTC 10341 / NRRL NRS-1264 / Gibson 46).